The following is a 171-amino-acid chain: Co-chaperone protein HscB (171 aa).

One can recognise a J domain in the interval 2–74 (DYFTLFGLPA…LTRAEYLLSL (73 aa)).

This sequence belongs to the HscB family. Interacts with HscA and stimulates its ATPase activity. Interacts with IscU.

Co-chaperone involved in the maturation of iron-sulfur cluster-containing proteins. Seems to help targeting proteins to be folded toward HscA. This chain is Co-chaperone protein HscB, found in Salmonella paratyphi A (strain AKU_12601).